We begin with the raw amino-acid sequence, 966 residues long: Aminopeptidase N (966 aa).

Residues 1-8 (MAKGFYIS) lie on the Cytoplasmic side of the membrane. The chain crosses the membrane as a helical; Signal-anchor for type II membrane protein span at residues 9 to 32 (KTLGILGILLGVAAVCTIIALSVV). The segment at 33-68 (YAQEKNRNAENSATAPTLPGSTSATTATTTPAVDES) is cytosolic Ser/Thr-rich junction. Topologically, residues 33 to 966 (YAQEKNRNAE…VFKWFTENSS (934 aa)) are extracellular. A disordered region spans residues 42–64 (ENSATAPTLPGSTSATTATTTPA). Residues 44 to 64 (SATAPTLPGSTSATTATTTPA) are compositionally biased toward low complexity. Residues 69-966 (KPWNQYRLPK…VFKWFTENSS (898 aa)) form a metalloprotease region. Residues N106, N114, and N128 are each glycosylated (N-linked (GlcNAc...) asparagine). Y176 carries the sulfotyrosine modification. 4 N-linked (GlcNAc...) asparagine glycosylation sites follow: N234, N288, N318, and N332. 351–355 (GAMEN) serves as a coordination point for substrate. Zn(2+) is bound at residue H387. The active-site Proton acceptor is E388. Residues H391 and E410 each coordinate Zn(2+). Sulfotyrosine is present on residues Y418 and Y423. 4 N-linked (GlcNAc...) asparagine glycosylation sites follow: N573, N606, N624, and N734. A disulfide bridge links C760 with C767. Residues N784 and N817 are each glycosylated (N-linked (GlcNAc...) asparagine). A disulfide bridge connects residues C797 and C833. A Phosphotyrosine modification is found at Y852.

It belongs to the peptidase M1 family. In terms of assembly, homodimer. Interacts with SLC6A19. Requires Zn(2+) as cofactor. N- and O-glycosylated. In terms of processing, sulfated. Post-translationally, may undergo proteolysis and give rise to a soluble form. Expressed in the intestinal brush border (at protein level). Highly expressed in intestinal tract and kidney, present in liver, lymph node, spleen, and brain. Found as well in monocytes, macrophages, dendritic cells, veiled cells and B-cells but not on T-cells and thymocytes.

Its subcellular location is the cell membrane. It carries out the reaction Release of an N-terminal amino acid, Xaa-|-Yaa- from a peptide, amide or arylamide. Xaa is preferably Ala, but may be most amino acids including Pro (slow action). When a terminal hydrophobic residue is followed by a prolyl residue, the two may be released as an intact Xaa-Pro dipeptide.. In terms of biological role, broad specificity aminopeptidase which plays a role in the final digestion of peptides generated from hydrolysis of proteins by gastric and pancreatic proteases. Also involved in the processing of various peptides including peptide hormones, such as angiotensin III and IV, neuropeptides, and chemokines. May also be involved the cleavage of peptides bound to major histocompatibility complex class II molecules of antigen presenting cells. May have a role in angiogenesis and promote cholesterol crystallization. May have a role in amino acid transport by acting as binding partner of amino acid transporter SLC6A19 and regulating its activity. In Mus musculus (Mouse), this protein is Aminopeptidase N (Anpep).